The sequence spans 661 residues: ATP-dependent RNA helicase vasa (661 aa).

Residues 1 to 10 (MSDDWDDEPI) show a composition bias toward acidic residues. The disordered stretch occupies residues 1–186 (MSDDWDDEPI…RRRRNEDDIN (186 aa)). Phosphoserine is present on serine 22. Phosphothreonine is present on threonine 27. Gly residues-rich tracts occupy residues 38–52 (DGVG…GYQG) and 60–83 (RIGG…GGFH). The span at 85-95 (GRREGERDFRG) shows a compositional bias: basic and acidic residues. Repeat copies occupy residues 93 to 99 (FRGGEGG), 100 to 106 (FRGGQGG), 107 to 113 (SRGGQGG), 114 to 120 (SRGGQGG), and 121 to 127 (FRGGEGG). The interval 93-127 (FRGGEGGFRGGQGGSRGGQGGSRGGQGGFRGGEGG) is 5 X 7 AA tandem repeats of [FS]-R-G-G-[EQ]-G-G. Residues 96–129 (GEGGFRGGQGGSRGGQGGSRGGQGGFRGGEGGFR) are compositionally biased toward gly residues. Residues 131-172 (RLYENEDGDERRGRLDREERGGERRGRLDREERGGERGERGD) show a composition bias toward basic and acidic residues. Positions 184–188 (DINNN) match the B30.2/SPRY domain-binding motif motif. The interval 184–203 (DINNNNNIVEDVERKREFYI) is required for posterior localization in oocyte. A Q motif motif is present at residues 245–273 (QHFTSADLRDIIIDNVNKSGYKIPTPIQK). In terms of domain architecture, Helicase ATP-binding spans 276–453 (IPVISSGRDL…GEFLKNYVFV (178 aa)). 289-296 (AQTGSGKT) provides a ligand contact to ATP. The DEAD box motif lies at 399–402 (DEAD). One can recognise a Helicase C-terminal domain in the interval 477–624 (KRSKLIEILS…TVPDFLRTCG (148 aa)).

The protein belongs to the DEAD box helicase family. DDX4/VASA subfamily. In terms of assembly, interacts with eIF5B and faf. Interacts with gus (via B30.2/SPRY domain) and Fsn (via B30.2/SPRY domain). Interacts with aub, me31B, eIF-4a and TER94. Interacts with piwi; this interaction is RNA independent. Interacts with Dcr-1 and Fmr1; these interactions occur in the polar granules. Requires Mg(2+) as cofactor. Post-translationally, ubiquitinated during oogenesis. Deubiquitinated by faf, which protects this protein from proteasome-mediated degradation. Abundantly expressed in the female germline. Gus and faf are required for vas expression in the posterior pole of the oocyte.

It localises to the cytoplasm. It is found in the perinuclear region. Its subcellular location is the cytoplasmic ribonucleoprotein granule. It carries out the reaction ATP + H2O = ADP + phosphate + H(+). Functionally, involved in translational control mechanisms operating in early stages of oogenesis. Required maternally in many stages of oogenesis, including cystocyte differentiation, oocyte differentiation, and specification of anterior-posterior polarity in the developing cysts. Essential for the formation and/or structural integrity of perinuclear nuage particles during germ cell formation. Required for gus, Fsn and aub accumulation at the posterior pole of the embryo. Required for the localization of vas to the perinuclear region of nurse cells. May have a role in production of piwi-interacting RNA (piRNA). The chain is ATP-dependent RNA helicase vasa from Drosophila melanogaster (Fruit fly).